A 315-amino-acid polypeptide reads, in one-letter code: Acetaldehyde dehydrogenase 2 (315 aa).

11 to 14 (SGNI) provides a ligand contact to NAD(+). The Acyl-thioester intermediate role is filled by Cys-129. NAD(+) contacts are provided by residues 160–168 (SAGPGTRSN) and Asn-290.

Belongs to the acetaldehyde dehydrogenase family.

The catalysed reaction is acetaldehyde + NAD(+) + CoA = acetyl-CoA + NADH + H(+). This is Acetaldehyde dehydrogenase 2 from Mycobacterium sp. (strain KMS).